Reading from the N-terminus, the 389-residue chain is Gastricsin (389 aa).

A signal peptide spans 1–16 (MKWMVVALVCLQLLEA). A propeptide spans 17–59 (KVTKVTLKKFKSIRENLREQGLLEDFLKTNHYDPAQKYHFGDF) (activation peptide). Positions 73 to 386 (YFGEISIGTP…DMGNNRVGFA (314 aa)) constitute a Peptidase A1 domain. D91 is a catalytic residue. Disulfide bonds link C104/C109 and C268/C272. The active site involves D277. The cysteines at positions 311 and 344 are disulfide-linked.

It belongs to the peptidase A1 family.

It is found in the secreted. The enzyme catalyses More restricted specificity than pepsin A, but shows preferential cleavage at Tyr-|-Xaa bonds. High activity on hemoglobin.. Its function is as follows. Hydrolyzes a variety of proteins. This Suncus murinus (Asian house shrew) protein is Gastricsin (PGC).